Consider the following 163-residue polypeptide: Calcium-binding protein 2 (163 aa).

The N-myristoyl glycine moiety is linked to residue Gly2. 4 consecutive EF-hand domains span residues 21–56 (EEIE…LGYM), 72–89 (GKVD…KLLA), 95–130 (IGVR…LLGE), and 132–163 (LSQR…MMSR). The Ca(2+) site is built by Asp34, Asp36, Asp38, Tyr40, and Glu45. Residues Asp108, Asn110, Asp112, Cys114, Glu119, Asp145, Asn147, Asp149, and Glu156 each coordinate Ca(2+).

It localises to the cytoplasm. The protein resides in the perinuclear region. It is found in the cell membrane. The protein localises to the golgi apparatus. Functionally, required for sound encoding at inner hair cells (IHCs) synapses, likely via inhibition of the inactivation of voltage-gated calcium channel of type 1.3 (Cav1.3) in the IHCs. Required for the normal transfer of light signals through the retina. This Bos taurus (Bovine) protein is Calcium-binding protein 2 (CABP2).